Reading from the N-terminus, the 349-residue chain is Green-sensitive opsin-2 (349 aa).

At 1-36 (MNGTEGNNFYVPLSNRTGLVRSPFEYPQYYLAEPWQ) the chain is on the extracellular side. Residues Asn-2 and Asn-15 are each glycosylated (N-linked (GlcNAc...) asparagine). The helical transmembrane segment at 37-61 (FKLLAVYMFFLICLGLPINGLTLIC) threads the bilayer. At 62–73 (TAQHKKLRQPLN) the chain is on the cytoplasmic side. A helical membrane pass occupies residues 74 to 99 (FILVNLAVAGAIMVCFGFTVTFYTAI). Residues 100-113 (NGYFALGPTGCAVE) are Extracellular-facing. A disulfide bond links Cys-110 and Cys-187. The chain crosses the membrane as a helical span at residues 114–133 (GFMATLGGEVALWSLVVLAI). Residues 134-152 (ERYIVVCKPMGSFKFSSTH) lie on the Cytoplasmic side of the membrane. The chain crosses the membrane as a helical span at residues 153–176 (ASAGIAFTWVMAMACAAPPLVGWS). Residues 177-202 (RYIPEGIQCSCGPDYYTLNPEYNNES) are Extracellular-facing. The chain crosses the membrane as a helical span at residues 203–230 (YVLYMFICHFILPVTIIFFTYGRLVCTV). The Cytoplasmic portion of the chain corresponds to 231-252 (KAAAAQQQDSASTQKAEREVTK). A helical transmembrane segment spans residues 253–276 (MVILMVLGFLVAWTPYATVAAWIF). Topologically, residues 277 to 284 (FNKGAAFS) are extracellular. Residues 285 to 309 (AQFMAIPAFFSKTSALYNPVIYVLL) form a helical membrane-spanning segment. Lys-296 carries the N6-(retinylidene)lysine modification. At 310 to 349 (NKQFRSCMLTTLFCGKNPLGDEESSTVSTSKTEVSSVSPA) the chain is on the cytoplasmic side. Residues 329–349 (GDEESSTVSTSKTEVSSVSPA) form a disordered region. Over residues 334 to 349 (STVSTSKTEVSSVSPA) the composition is skewed to low complexity.

This sequence belongs to the G-protein coupled receptor 1 family. Opsin subfamily. Post-translationally, phosphorylated on some or all of the serine and threonine residues present in the C-terminal region. As to expression, the color pigments are found in the cone photoreceptor cells.

The protein resides in the membrane. Visual pigments are the light-absorbing molecules that mediate vision. They consist of an apoprotein, opsin, covalently linked to cis-retinal. The sequence is that of Green-sensitive opsin-2 from Carassius auratus (Goldfish).